The chain runs to 268 residues: Tryptophan synthase alpha chain (268 aa).

Residues glutamate 49 and aspartate 60 each act as proton acceptor in the active site.

The protein belongs to the TrpA family. Tetramer of two alpha and two beta chains.

The enzyme catalyses (1S,2R)-1-C-(indol-3-yl)glycerol 3-phosphate + L-serine = D-glyceraldehyde 3-phosphate + L-tryptophan + H2O. Its pathway is amino-acid biosynthesis; L-tryptophan biosynthesis; L-tryptophan from chorismate: step 5/5. Its function is as follows. The alpha subunit is responsible for the aldol cleavage of indoleglycerol phosphate to indole and glyceraldehyde 3-phosphate. In Haemophilus influenzae (strain PittGG), this protein is Tryptophan synthase alpha chain.